Consider the following 404-residue polypeptide: Cysteine desulfurase IscS (404 aa).

Residues 75–76, asparagine 155, glutamine 183, and 203–205 each bind pyridoxal 5'-phosphate; these read AT and SAH. N6-(pyridoxal phosphate)lysine is present on lysine 206. Threonine 243 is a pyridoxal 5'-phosphate binding site. Cysteine 328 (cysteine persulfide intermediate) is an active-site residue. Cysteine 328 contributes to the [2Fe-2S] cluster binding site.

It belongs to the class-V pyridoxal-phosphate-dependent aminotransferase family. NifS/IscS subfamily. As to quaternary structure, homodimer. Forms a heterotetramer with IscU, interacts with other sulfur acceptors. It depends on pyridoxal 5'-phosphate as a cofactor.

Its subcellular location is the cytoplasm. The catalysed reaction is (sulfur carrier)-H + L-cysteine = (sulfur carrier)-SH + L-alanine. The protein operates within cofactor biosynthesis; iron-sulfur cluster biosynthesis. In terms of biological role, master enzyme that delivers sulfur to a number of partners involved in Fe-S cluster assembly, tRNA modification or cofactor biosynthesis. Catalyzes the removal of elemental sulfur atoms from cysteine to produce alanine. Functions as a sulfur delivery protein for Fe-S cluster synthesis onto IscU, an Fe-S scaffold assembly protein, as well as other S acceptor proteins. In Buchnera aphidicola subsp. Baizongia pistaciae (strain Bp), this protein is Cysteine desulfurase IscS.